The following is a 359-amino-acid chain: Cytochrome c oxidase subunit 2 (359 aa).

The signal sequence occupies residues Met1–Gly28. A lipid anchor (N-palmitoyl cysteine) is attached at Cys29. Residue Cys29 is the site of S-diacylglycerol cysteine attachment. 2 consecutive transmembrane segments (helical) span residues Val64–Phe84 and Val107–Phe127. Residues His244, Cys285, Glu287, Cys289, His293, and Met296 each contribute to the Cu cation site. A disordered region spans residues Ser338–Ala359.

The protein belongs to the cytochrome c oxidase subunit 2 family. Associates with subunits I, III and IV to form cytochrome c oxidase. Binuclear copper center (CuA) is required as a cofactor.

The protein resides in the cell membrane. It carries out the reaction 4 Fe(II)-[cytochrome c] + O2 + 8 H(+)(in) = 4 Fe(III)-[cytochrome c] + 2 H2O + 4 H(+)(out). Its function is as follows. Subunits I and II form the functional core of the enzyme complex. Electrons originating in cytochrome c are transferred via heme a and Cu(A) to the binuclear center formed by heme a3 and Cu(B). This Corynebacterium efficiens (strain DSM 44549 / YS-314 / AJ 12310 / JCM 11189 / NBRC 100395) protein is Cytochrome c oxidase subunit 2 (ctaC).